The chain runs to 74 residues: Auswaprin-a (74 aa).

The N-terminal stretch at 1-24 (MSSGGLLLLLGLLTLWGVLTPVSS) is a signal peptide. The 45-residue stretch at 27–71 (RPKKPGLCPPRPQKPCVKECKNDWSCSGQQKCCNYGCIDECRDPI) folds into the WAP domain. Intrachain disulfides connect cysteine 34–cysteine 59, cysteine 42–cysteine 63, cysteine 46–cysteine 58, and cysteine 52–cysteine 67.

The protein belongs to the venom waprin family. In terms of tissue distribution, expressed by the venom gland.

The protein resides in the secreted. Damages membranes of susceptible bacteria. Has no hemolytic activity. Not toxic to mice. Does not inhibit the proteinases elastase and cathepsin G. In Pseudechis australis (Mulga snake), this protein is Auswaprin-a.